Here is a 453-residue protein sequence, read N- to C-terminus: UDP-N-acetylmuramoylalanine--D-glutamate ligase (453 aa).

Residue 115–121 participates in ATP binding; that stretch reads GTNGKTT.

The protein belongs to the MurCDEF family.

It localises to the cytoplasm. It catalyses the reaction UDP-N-acetyl-alpha-D-muramoyl-L-alanine + D-glutamate + ATP = UDP-N-acetyl-alpha-D-muramoyl-L-alanyl-D-glutamate + ADP + phosphate + H(+). It participates in cell wall biogenesis; peptidoglycan biosynthesis. Functionally, cell wall formation. Catalyzes the addition of glutamate to the nucleotide precursor UDP-N-acetylmuramoyl-L-alanine (UMA). The sequence is that of UDP-N-acetylmuramoylalanine--D-glutamate ligase from Geotalea daltonii (strain DSM 22248 / JCM 15807 / FRC-32) (Geobacter daltonii).